The chain runs to 240 residues: Protein CDV3 homolog A (240 aa).

Residues 1–15 are compositionally biased toward basic and acidic residues; sequence MAEPQEKSLDDFFAK. Residues 1–204 form a disordered region; sequence MAEPQEKSLD…TESRREKEME (204 aa). An N-acetylalanine modification is found at Ala-2. Over residues 27 to 52 the composition is skewed to low complexity; sequence SGSAAGSRGSARPPDGAPSSSSSMSG. A compositionally biased stretch (basic and acidic residues) spans 57 to 73; it reads VKKEKSGKSDNPDQLQE. Composition is skewed to polar residues over residues 127-141 and 181-192; these read DKSS…QAQA and SDTQFPSLQATA. A compositionally biased stretch (basic and acidic residues) spans 193 to 204; the sequence is KHTESRREKEME.

Belongs to the CDV3 family.

It localises to the cytoplasm. The protein is Protein CDV3 homolog A (cdv3-a) of Xenopus laevis (African clawed frog).